The sequence spans 217 residues: LexA repressor (217 aa).

Residues 28–48 (RAEIAAEFGFSSPNAAEEHLR) constitute a DNA-binding region (H-T-H motif). Active-site for autocatalytic cleavage activity residues include serine 136 and lysine 173.

Belongs to the peptidase S24 family. Homodimer.

The catalysed reaction is Hydrolysis of Ala-|-Gly bond in repressor LexA.. Functionally, represses a number of genes involved in the response to DNA damage (SOS response), including recA and lexA. In the presence of single-stranded DNA, RecA interacts with LexA causing an autocatalytic cleavage which disrupts the DNA-binding part of LexA, leading to derepression of the SOS regulon and eventually DNA repair. This chain is LexA repressor, found in Cupriavidus taiwanensis (strain DSM 17343 / BCRC 17206 / CCUG 44338 / CIP 107171 / LMG 19424 / R1) (Ralstonia taiwanensis (strain LMG 19424)).